Consider the following 660-residue polypeptide: Arginine--tRNA ligase, cytoplasmic (660 aa).

M1 is modified (N-acetylmethionine). The tract at residues 1–72 (MDGLVAQCSA…QEERRKPTKN (72 aa)) is could be involved in the assembly of the multisynthetase complex. L-arginine-binding positions include 200 to 202 (SPN), H211, Y384, D388, and Q412. Residues 201 to 212 (PNIAKEMHVGHL) carry the 'HIGH' region motif. The segment at 529–543 (NTAAYLLYAFTRIRS) is interaction with tRNA.

It belongs to the class-I aminoacyl-tRNA synthetase family. Interacts (via N-terminus) with AIMP1 (via N-terminus); this stimulates its catalytic activity. Interacts (via N-terminus) with LARS2 (via C-terminus). Monomer. Part of a multisubunit complex that groups tRNA ligases for Arg (RARS1), Asp (DARS1), Gln (QARS1), Ile (IARS1), Leu (LARS1), Lys (KARS1), Met (MARS1) the bifunctional ligase for Glu and Pro (EPRS1) and the auxiliary subunits AIMP1/p43, AIMP2/p38 and EEF1E1/p18. Interacts with QARS1. Part of a complex composed of RARS1, QARS1 and AIMP1.

The protein resides in the cytoplasm. It localises to the cytosol. It carries out the reaction tRNA(Arg) + L-arginine + ATP = L-arginyl-tRNA(Arg) + AMP + diphosphate. Its function is as follows. Forms part of a macromolecular complex that catalyzes the attachment of specific amino acids to cognate tRNAs during protein synthesis. Modulates the secretion of AIMP1 and may be involved in generation of the inflammatory cytokine EMAP2 from AIMP1. This is Arginine--tRNA ligase, cytoplasmic (Rars1) from Mus musculus (Mouse).